Here is a 498-residue protein sequence, read N- to C-terminus: Lycopene beta cyclase, chloroplastic/chromoplastic (498 aa).

The N-terminal 79 residues, 1–79 (MDTLLRTPNN…ELPMYDPSKG (79 aa)), are a transit peptide targeting the chloroplast and chromoplast. 84 to 112 (LAVVGGGPAGLAVAQQVSEAGLSVCSIDP) contacts NAD(+). Residues 293–297 (FLEET) carry the FLEET motif motif.

Belongs to the lycopene cyclase family. As to quaternary structure, monomer. The cofactor is FAD. NADPH serves as cofactor.

The protein localises to the plastid. It is found in the chloroplast. The protein resides in the chromoplast. The enzyme catalyses a carotenoid psi-end group = a carotenoid beta-end derivative. It carries out the reaction all-trans-lycopene = gamma-carotene. The catalysed reaction is gamma-carotene = all-trans-beta-carotene. It catalyses the reaction all-trans-neurosporene = beta-zeacarotene. The enzyme catalyses beta-zeacarotene = 7,8-dihydro-beta-carotene. It functions in the pathway carotenoid biosynthesis; beta-carotene biosynthesis. It participates in carotenoid biosynthesis; beta-zeacarotene biosynthesis. Its function is as follows. Catalyzes the double cyclization reaction which converts lycopene to beta-carotene. Catalyzes the double cyclization reaction which converts neurosporene to 7,8-dihydro-beta-carotene. The protein is Lycopene beta cyclase, chloroplastic/chromoplastic of Capsicum annuum (Capsicum pepper).